The primary structure comprises 397 residues: Trans-2-enoyl-CoA reductase [NADH] (397 aa).

NAD(+) is bound by residues 53 to 58 (GCSNGY), 79 to 80 (FE), 116 to 117 (DA), and 144 to 145 (LA). Substrate is bound at residue Y230. The active-site Proton donor is Y240. NAD(+)-binding positions include K249 and 276–278 (LVT).

Belongs to the TER reductase family. Monomer.

The enzyme catalyses a 2,3-saturated acyl-CoA + NAD(+) = a (2E)-enoyl-CoA + NADH + H(+). Its pathway is lipid metabolism; fatty acid biosynthesis. Inhibited by lauroyl-CoA. Its function is as follows. Involved in the fatty acid synthesis (FAS II). Catalyzes the reduction of the carbon-carbon double bond of crotonyl-CoA to yield butyryl-CoA. In vitro it can also use hexenoyl-CoA and dodecenoyl-CoA as substrates. The polypeptide is Trans-2-enoyl-CoA reductase [NADH] (Treponema denticola (strain ATCC 35405 / DSM 14222 / CIP 103919 / JCM 8153 / KCTC 15104)).